The following is a 272-amino-acid chain: Indole-3-glycerol phosphate synthase (272 aa).

It belongs to the TrpC family.

The enzyme catalyses 1-(2-carboxyphenylamino)-1-deoxy-D-ribulose 5-phosphate + H(+) = (1S,2R)-1-C-(indol-3-yl)glycerol 3-phosphate + CO2 + H2O. The protein operates within amino-acid biosynthesis; L-tryptophan biosynthesis; L-tryptophan from chorismate: step 4/5. The protein is Indole-3-glycerol phosphate synthase of Mycobacterium sp. (strain JLS).